The chain runs to 199 residues: 7-methyl-GTP pyrophosphatase (199 aa).

The active-site Proton acceptor is D76.

It belongs to the Maf family. YceF subfamily. It depends on a divalent metal cation as a cofactor.

The protein resides in the cytoplasm. The enzyme catalyses N(7)-methyl-GTP + H2O = N(7)-methyl-GMP + diphosphate + H(+). In terms of biological role, nucleoside triphosphate pyrophosphatase that hydrolyzes 7-methyl-GTP (m(7)GTP). May have a dual role in cell division arrest and in preventing the incorporation of modified nucleotides into cellular nucleic acids. The chain is 7-methyl-GTP pyrophosphatase (maf-2) from Brucella suis biovar 1 (strain 1330).